A 316-amino-acid polypeptide reads, in one-letter code: Annexin D7 (316 aa).

An N-acetylalanine modification is found at Ala-2. Annexin repeat units follow at residues Pro-11–Phe-82, Glu-83–Ser-154, Thr-166–Lys-237, and Tyr-241–Gly-312. Residues Phe-24, Gly-26, Gly-28, and Glu-68 each coordinate Ca(2+). The residue at position 95 (Ser-95) is a Phosphoserine. Thr-100 and Thr-112 each carry phosphothreonine. The residue at position 129 (Tyr-129) is a Phosphotyrosine. Ca(2+) is bound by residues Ile-254 and Gly-258. Tyr-283 carries the post-translational modification Phosphotyrosine. Ser-288 carries the post-translational modification Phosphoserine. Ca(2+) contacts are provided by Asp-298, Thr-299, and Glu-304.

This sequence belongs to the annexin (TC 1.A.31.1) family. Expressed in flowers.

This is Annexin D7 (ANNAT7) from Arabidopsis thaliana (Mouse-ear cress).